The sequence spans 414 residues: Esterase FrsA (414 aa).

It belongs to the FrsA family.

It carries out the reaction a carboxylic ester + H2O = an alcohol + a carboxylate + H(+). In terms of biological role, catalyzes the hydrolysis of esters. This is Esterase FrsA from Escherichia coli O17:K52:H18 (strain UMN026 / ExPEC).